A 429-amino-acid polypeptide reads, in one-letter code: Probable M18 family aminopeptidase 2 (429 aa).

Residues His-82, His-156, and His-401 each coordinate Zn(2+).

This sequence belongs to the peptidase M18 family. Requires Zn(2+) as cofactor.

The chain is Probable M18 family aminopeptidase 2 from Pseudomonas putida (strain ATCC 700007 / DSM 6899 / JCM 31910 / BCRC 17059 / LMG 24140 / F1).